Reading from the N-terminus, the 361-residue chain is Chorismate synthase (361 aa).

NADP(+) is bound by residues Arg48 and Arg54. Residues 125–127 (RSS), 238–239 (NA), Gly278, 293–297 (KPTSS), and Arg319 each bind FMN.

The protein belongs to the chorismate synthase family. As to quaternary structure, homotetramer. It depends on FMNH2 as a cofactor.

The enzyme catalyses 5-O-(1-carboxyvinyl)-3-phosphoshikimate = chorismate + phosphate. Its pathway is metabolic intermediate biosynthesis; chorismate biosynthesis; chorismate from D-erythrose 4-phosphate and phosphoenolpyruvate: step 7/7. Functionally, catalyzes the anti-1,4-elimination of the C-3 phosphate and the C-6 proR hydrogen from 5-enolpyruvylshikimate-3-phosphate (EPSP) to yield chorismate, which is the branch point compound that serves as the starting substrate for the three terminal pathways of aromatic amino acid biosynthesis. This reaction introduces a second double bond into the aromatic ring system. In Salmonella typhi, this protein is Chorismate synthase.